Reading from the N-terminus, the 233-residue chain is Phosducin-like protein C2A9.09 (233 aa).

The Phosducin domain maps to 58-212 (EDEEDDEFLQ…DIAALKDPQN (155 aa)). Positions 86–233 (FGSVYPISKP…VNDDLDDDFD (148 aa)) are thioredoxin fold. The disordered stretch occupies residues 207–233 (LKDPQNAEDELGKRDSSVNDDLDDDFD). Residues S222 and S223 each carry the phosphoserine modification. Acidic residues predominate over residues 224-233 (VNDDLDDDFD).

This sequence belongs to the phosducin family.

In Schizosaccharomyces pombe (strain 972 / ATCC 24843) (Fission yeast), this protein is Phosducin-like protein C2A9.09.